The chain runs to 587 residues: Lipoprotein LpqB (587 aa).

The signal sequence occupies residues methionine 1–glycine 19. Residue cysteine 20 is the site of N-palmitoyl cysteine attachment. The S-diacylglycerol cysteine moiety is linked to residue cysteine 20.

It belongs to the LpqB lipoprotein family. As to quaternary structure, interacts with MtrB, probably extracytoplasmically.

The protein localises to the cell membrane. Its subcellular location is the secreted. The protein resides in the cell wall. May modulate activity of the MtrAB system in controlling homeostasis of the cell wall and cell division. This is Lipoprotein LpqB from Mycobacterium tuberculosis (strain CDC 1551 / Oshkosh).